The following is a 380-amino-acid chain: Cytochrome b (380 aa).

4 helical membrane-spanning segments follow: residues F33 to M53, W77 to I98, W113 to L133, and F178 to L198. 2 residues coordinate heme b: H83 and H97. Residues H182 and H196 each coordinate heme b. H201 contacts a ubiquinone. 4 helical membrane passes run Y226–S246, L288–H308, A320–G340, and F347–P367.

It belongs to the cytochrome b family. The cytochrome bc1 complex contains 3 respiratory subunits (MT-CYB, CYC1 and UQCRFS1), 2 core proteins (UQCRC1 and UQCRC2) and probably 6 low-molecular weight proteins. Heme b is required as a cofactor.

Its subcellular location is the mitochondrion inner membrane. Its function is as follows. Component of the ubiquinol-cytochrome c reductase complex (complex III or cytochrome b-c1 complex) that is part of the mitochondrial respiratory chain. The b-c1 complex mediates electron transfer from ubiquinol to cytochrome c. Contributes to the generation of a proton gradient across the mitochondrial membrane that is then used for ATP synthesis. The chain is Cytochrome b (mt-cyb) from Scomber scombrus (Atlantic mackerel).